Here is a 778-residue protein sequence, read N- to C-terminus: General transcription and DNA repair factor IIH helicase subunit XPD/RAD3 (778 aa).

Residues 7–285 form the Helicase ATP-binding domain; that stretch reads DLPVLFPYPK…KVDSQKLQDE (279 aa). ATP is bound at residue 42-49; it reads MPSGTGKT. Positions 115, 133, 156, and 191 each coordinate [4Fe-4S] cluster. Residues 235–238 carry the DEAH box motif; that stretch reads DEAH. Residues 750–765 are compositionally biased toward basic and acidic residues; that stretch reads SRKDQGGFIENENKEG. The interval 750–778 is disordered; the sequence is SRKDQGGFIENENKEGEQDEDEDEDIEMQ. Acidic residues predominate over residues 766-778; it reads EQDEDEDEDIEMQ.

It belongs to the helicase family. RAD3/XPD subfamily. As to quaternary structure, component of the 7-subunit TFIIH core complex composed of XPB/SSL2, XPD/RAD3, SSL1, TFB1, TFB2, TFB4 and TFB5, which is active in NER. The core complex associates with the 3-subunit CTD-kinase module TFIIK composed of CCL1, KIN28 and TFB3 to form the 10-subunit holoenzyme (holo-TFIIH) active in transcription. An additionnal subunit, TFB6, plays a role in the dissociation of the SSL2 helicase from TFIIH after transcription initiation. [4Fe-4S] cluster is required as a cofactor. Mg(2+) serves as cofactor.

It is found in the nucleus. The catalysed reaction is Couples ATP hydrolysis with the unwinding of duplex DNA at the replication fork by translocating in the 5'-3' direction. This creates two antiparallel DNA single strands (ssDNA). The leading ssDNA polymer is the template for DNA polymerase III holoenzyme which synthesizes a continuous strand.. It carries out the reaction ATP + H2O = ADP + phosphate + H(+). ATP-dependent 5'-3' DNA helicase. Component of the general transcription and DNA repair factor IIH (TFIIH) core complex, which is involved in general and transcription-coupled nucleotide excision repair (NER) of damaged DNA and, when complexed to TFIIK, in RNA transcription by RNA polymerase II. In NER, TFIIH acts by opening DNA around the lesion to allow the excision of the damaged oligonucleotide and its replacement by a new DNA fragment. The ATP-dependent helicase activity of XPD/RAD3 is required for DNA opening. In transcription, TFIIH has an essential role in transcription initiation. When the pre-initiation complex (PIC) has been established, TFIIH is required for promoter opening and promoter escape. Phosphorylation of the C-terminal tail (CTD) of the largest subunit of RNA polymerase II by the kinase module TFIIK controls the initiation of transcription. XPD/RAD3 acts by forming a bridge between TFIIK and the core-TFIIH complex. Involved in the maintenance of the fidelity of DNA replication. Has single-stranded DNA-dependent ATPase activity. 5'-3' DNA helicase activity requires ATP (dATP partially substitutes), will unwind over 800 bp dsDNA. Able to unwind an RNA:DNA hybrid. This is General transcription and DNA repair factor IIH helicase subunit XPD/RAD3 from Saccharomyces cerevisiae (strain ATCC 204508 / S288c) (Baker's yeast).